A 127-amino-acid chain; its full sequence is Major sperm protein 38 (127 aa).

A2 bears the N-acetylalanine mark. In terms of domain architecture, MSP spans 9–126; it reads DIQTQPGTKI…RRKNLPIEYN (118 aa).

In terms of tissue distribution, sperm.

The protein localises to the cell projection. The protein resides in the pseudopodium. Its subcellular location is the cytoplasm. It localises to the cytoskeleton. Functionally, central component in molecular interactions underlying sperm crawling. Forms an extensive filament system that extends from sperm villipoda, along the leading edge of the pseudopod. The sequence is that of Major sperm protein 38 (msp-38) from Caenorhabditis elegans.